The following is a 298-amino-acid chain: tRNA dimethylallyltransferase (298 aa).

Residue 12 to 19 (GPTASGKT) coordinates ATP. 14–19 (TASGKT) provides a ligand contact to substrate. The interaction with substrate tRNA stretch occupies residues 37-40 (DSRQ).

Belongs to the IPP transferase family. In terms of assembly, monomer. Mg(2+) serves as cofactor.

It catalyses the reaction adenosine(37) in tRNA + dimethylallyl diphosphate = N(6)-dimethylallyladenosine(37) in tRNA + diphosphate. In terms of biological role, catalyzes the transfer of a dimethylallyl group onto the adenine at position 37 in tRNAs that read codons beginning with uridine, leading to the formation of N6-(dimethylallyl)adenosine (i(6)A). In Synechococcus sp. (strain CC9902), this protein is tRNA dimethylallyltransferase.